Consider the following 61-residue polypeptide: uncharacterized protein (61 aa).

This is an uncharacterized protein from Staphylococcus epidermidis.